A 337-amino-acid polypeptide reads, in one-letter code: Inositol 2-dehydrogenase (337 aa).

Belongs to the Gfo/Idh/MocA family. As to quaternary structure, homotetramer.

It catalyses the reaction myo-inositol + NAD(+) = scyllo-inosose + NADH + H(+). Its function is as follows. Involved in the oxidation of myo-inositol (MI) to 2-keto-myo-inositol (2KMI or 2-inosose). The sequence is that of Inositol 2-dehydrogenase from Burkholderia cenocepacia (strain HI2424).